Reading from the N-terminus, the 494-residue chain is Glutamyl-tRNA(Gln) amidotransferase subunit A, mitochondrial (494 aa).

Residues lysine 79 and serine 160 each act as charge relay system in the active site. The active-site Acyl-ester intermediate is serine 184.

The protein belongs to the amidase family. GatA subfamily. In terms of assembly, subunit of the heterotrimeric GatCAB amidotransferase (AdT) complex, composed of A, B and C subunits.

Its subcellular location is the mitochondrion. It catalyses the reaction L-glutamyl-tRNA(Gln) + L-glutamine + ATP + H2O = L-glutaminyl-tRNA(Gln) + L-glutamate + ADP + phosphate + H(+). Functionally, allows the formation of correctly charged Gln-tRNA(Gln) through the transamidation of misacylated Glu-tRNA(Gln) in the mitochondria. The reaction takes place in the presence of glutamine and ATP through an activated gamma-phospho-Glu-tRNA(Gln). The polypeptide is Glutamyl-tRNA(Gln) amidotransferase subunit A, mitochondrial (Aedes aegypti (Yellowfever mosquito)).